The following is a 548-amino-acid chain: Membrane protein insertase YidC (548 aa).

The chain crosses the membrane as a helical span at residues 6-26; the sequence is NLLVIALLFVSFMIWQAWEQD. The segment at 28-54 is disordered; the sequence is NPQPQTQQTTQTTTTAAGSAADQGVPA. Residues 29–42 show a composition bias toward low complexity; it reads PQPQTQQTTQTTTT. A run of 4 helical transmembrane segments spans residues 350-370, 424-444, 458-478, and 499-519; these read FLGN…GIMY, FPLI…MGSI, LSAQ…MFFI, and PVIF…YYIV.

Belongs to the OXA1/ALB3/YidC family. Type 1 subfamily. Interacts with the Sec translocase complex via SecD. Specifically interacts with transmembrane segments of nascent integral membrane proteins during membrane integration.

It localises to the cell inner membrane. Its function is as follows. Required for the insertion and/or proper folding and/or complex formation of integral membrane proteins into the membrane. Involved in integration of membrane proteins that insert both dependently and independently of the Sec translocase complex, as well as at least some lipoproteins. Aids folding of multispanning membrane proteins. The protein is Membrane protein insertase YidC of Citrobacter koseri (strain ATCC BAA-895 / CDC 4225-83 / SGSC4696).